Consider the following 268-residue polypeptide: Hydroxyethylthiazole kinase (268 aa).

A substrate-binding site is contributed by Met46. Positions 122 and 168 each coordinate ATP. Gly195 serves as a coordination point for substrate.

Belongs to the Thz kinase family. Mg(2+) is required as a cofactor.

It carries out the reaction 5-(2-hydroxyethyl)-4-methylthiazole + ATP = 4-methyl-5-(2-phosphooxyethyl)-thiazole + ADP + H(+). Its pathway is cofactor biosynthesis; thiamine diphosphate biosynthesis; 4-methyl-5-(2-phosphoethyl)-thiazole from 5-(2-hydroxyethyl)-4-methylthiazole: step 1/1. Functionally, catalyzes the phosphorylation of the hydroxyl group of 4-methyl-5-beta-hydroxyethylthiazole (THZ). The chain is Hydroxyethylthiazole kinase from Desulfatibacillum aliphaticivorans.